A 236-amino-acid polypeptide reads, in one-letter code: Rab-like protein 3 (236 aa).

Residues 1–235 are small GTPase-like; that stretch reads MASLDRVKVL…GGGALKNFHC (235 aa). GTP is bound by residues 16 to 21, 148 to 150, and 179 to 180; these read GVGKSS, KLD, and DC.

The protein belongs to the small GTPase superfamily. Rab family. Homodimer. Interacts with GPR89; the interaction stabilizes GPR89. Interacts with RAP1GDS1.

Functionally, required for KRAS signaling regulation and modulation of cell proliferation. Regulator of KRAS prenylation, and probably prenylation of other small GTPases. Required for lymphocyte development and function. Not required for myeloid cell development. The chain is Rab-like protein 3 (Rabl3) from Mus musculus (Mouse).